Here is a 35-residue protein sequence, read N- to C-terminus: Photosystem II reaction center protein T (35 aa).

The chain crosses the membrane as a helical span at residues 3–23; the sequence is ALVYTFLLVSTLGIIFFAIFF.

This sequence belongs to the PsbT family. As to quaternary structure, PSII is composed of 1 copy each of membrane proteins PsbA, PsbB, PsbC, PsbD, PsbE, PsbF, PsbH, PsbI, PsbJ, PsbK, PsbL, PsbM, PsbT, PsbY, PsbZ, Psb30/Ycf12, at least 3 peripheral proteins of the oxygen-evolving complex and a large number of cofactors. It forms dimeric complexes.

It localises to the plastid. The protein localises to the chloroplast thylakoid membrane. In terms of biological role, found at the monomer-monomer interface of the photosystem II (PS II) dimer, plays a role in assembly and dimerization of PSII. PSII is a light-driven water plastoquinone oxidoreductase, using light energy to abstract electrons from H(2)O, generating a proton gradient subsequently used for ATP formation. This Stewartia pseudocamellia (Japanese stewartia) protein is Photosystem II reaction center protein T.